We begin with the raw amino-acid sequence, 341 residues long: Uroporphyrinogen decarboxylase (341 aa).

Residues 23-27, Asp-73, Tyr-147, Ser-202, and His-318 each bind substrate; that span reads RQAGR.

This sequence belongs to the uroporphyrinogen decarboxylase family. Homodimer.

It is found in the cytoplasm. The enzyme catalyses uroporphyrinogen III + 4 H(+) = coproporphyrinogen III + 4 CO2. The protein operates within porphyrin-containing compound metabolism; protoporphyrin-IX biosynthesis; coproporphyrinogen-III from 5-aminolevulinate: step 4/4. Catalyzes the decarboxylation of four acetate groups of uroporphyrinogen-III to yield coproporphyrinogen-III. In Novosphingobium aromaticivorans (strain ATCC 700278 / DSM 12444 / CCUG 56034 / CIP 105152 / NBRC 16084 / F199), this protein is Uroporphyrinogen decarboxylase.